A 508-amino-acid chain; its full sequence is Asparagine--tRNA ligase (508 aa).

The protein belongs to the class-II aminoacyl-tRNA synthetase family. In terms of assembly, homodimer.

It is found in the cytoplasm. The catalysed reaction is tRNA(Asn) + L-asparagine + ATP = L-asparaginyl-tRNA(Asn) + AMP + diphosphate + H(+). The sequence is that of Asparagine--tRNA ligase from Streptococcus suis (strain 05ZYH33).